A 364-amino-acid polypeptide reads, in one-letter code: Oxidized low-density lipoprotein receptor 1 (364 aa).

Positions Met1–Lys21 are disordered. Over Met1–Ser31 the chain is Cytoplasmic. The chain crosses the membrane as a helical; Signal-anchor for type II membrane protein span at residues Thr32–Val54. S-palmitoyl cysteine attachment occurs at residues Cys35 and Cys45. Residues Gln55–His242 are neck. Topologically, residues Gln55–Gln364 are extracellular. Residues Asn72, Asn92, and Asn138 are each glycosylated (N-linked (GlcNAc...) asparagine). A coiled-coil region spans residues Gln83 to Gly233. 3 consecutive repeat copies span residues Glu96–Glu141, Glu142–Glu187, and Glu188–Gly233. 3 disulfide bridges follow: Cys235–Cys246, Cys262–Cys354, and Cys333–Cys346. One can recognise a C-type lectin domain in the interval His242 to Gln355.

In terms of assembly, homodimer; disulfide-linked. May form a hexamer composed of 3 homodimers. Interacts with HSP70. N-glycosylated. As to expression, predominantly expressed in lung and at lower level in kidney. Expressed in macrophages but not in vascular smooth muscle cells.

The protein localises to the cell membrane. It localises to the membrane raft. It is found in the secreted. Functionally, receptor that mediates the recognition, internalization and degradation of oxidatively modified low density lipoprotein (oxLDL) by vascular endothelial cells. OxLDL is a marker of atherosclerosis that induces vascular endothelial cell activation and dysfunction, resulting in pro-inflammatory responses, pro-oxidative conditions and apoptosis. Its association with oxLDL induces the activation of NF-kappa-B through an increased production of intracellular reactive oxygen and a variety of pro-atherogenic cellular responses including a reduction of nitric oxide (NO) release, monocyte adhesion and apoptosis. In addition to binding oxLDL, it acts as a receptor for the HSP70 protein involved in antigen cross-presentation to naive T-cells in dendritic cells, thereby participating in cell-mediated antigen cross-presentation. Also involved in inflammatory process, by acting as a leukocyte-adhesion molecule at the vascular interface in endotoxin-induced inflammation. Also acts as a receptor for advanced glycation end (AGE) products, activated platelets, monocytes, apoptotic cells and both Gram-negative and Gram-positive bacteria. In Rattus norvegicus (Rat), this protein is Oxidized low-density lipoprotein receptor 1 (Olr1).